A 611-amino-acid chain; its full sequence is Chaperonin 60 subunit beta 4, chloroplastic (611 aa).

Residues 1–37 (MAFSQAALSALPLSDRTFRKKPSSSSSSSPNFVLRVR) constitute a chloroplast transit peptide. A coiled-coil region spans residues 377 to 480 (QKAVDERVSQ…LDNTEQKIGA (104 aa)). The disordered stretch occupies residues 574–595 (INPPLPTSSPATSSMFPDRKLP).

Belongs to the chaperonin (HSP60) family. As to quaternary structure, part of the Cpn60 complex composed of 7 alpha and 7 beta subunits. Can also form a complex composed of 14 beta subunits only. Both complexes show ATPase activity. The Cpn60 complex interacts with the Cpn10 complex. Interacts with NDHH.

The protein resides in the plastid. The protein localises to the chloroplast stroma. Functionally, involved specifically in the folding of NDHH, a subunit of the chloroplast NADH dehydrogenase-like complex (NDH). This is Chaperonin 60 subunit beta 4, chloroplastic (CPN60B4) from Arabidopsis thaliana (Mouse-ear cress).